Here is a 147-residue protein sequence, read N- to C-terminus: Lysozyme C-1 (147 aa).

The N-terminal stretch at 1-18 (MKALIILGLLCLSVAVQG) is a signal peptide. The 129-residue stretch at 19–147 (KVFERCELAR…VSSYVEGCSL (129 aa)) folds into the C-type lysozyme domain. 4 disulfide bridges follow: Cys24–Cys145, Cys48–Cys133, Cys83–Cys99, and Cys95–Cys113. Active-site residues include Glu53 and Asp71.

This sequence belongs to the glycosyl hydrolase 22 family. As to quaternary structure, monomer. In terms of tissue distribution, expressed in stomach.

The protein localises to the secreted. It carries out the reaction Hydrolysis of (1-&gt;4)-beta-linkages between N-acetylmuramic acid and N-acetyl-D-glucosamine residues in a peptidoglycan and between N-acetyl-D-glucosamine residues in chitodextrins.. Its function is as follows. Lysozymes have primarily a bacteriolytic function; those in tissues and body fluids are associated with the monocyte-macrophage system and enhance the activity of immunoagents. This chain is Lysozyme C-1, found in Ovis aries (Sheep).